The following is a 105-amino-acid chain: 5-hydroxymethyl-dUMP N-hydrolase (105 aa).

5-hydroxymethyl-dUMP-binding residues include Gly6, Ile8, Ser42, Gly44, Glu48, and Ser72.

The protein belongs to the 2'-deoxynucleoside 5'-phosphate N-hydrolase 1 family. As to quaternary structure, monomer and homodimer.

Its subcellular location is the cytoplasm. It is found in the nucleus. It catalyses the reaction 5-hydroxymethyl-dUMP + H2O = 5-hydroxymethyluracil + 2-deoxy-D-ribose 5-phosphate. Functionally, part of a nucleotide salvage pathway that eliminates epigenetically modified 5-hydroxymethyl-dCMP (hmdCMP) in a two-step process entailing deamination to cytotoxic 5-hydroxymethyl-dUMP (hmdUMP), followed by its hydrolysis into 5-hydroxymethyluracil (hmU) and 2-deoxy-D-ribose 5-phosphate (deoxyribosephosphate). Catalyzes the second step in that pathway, the hydrolysis of the N-glycosidic bond in hmdUMP, degrading this cytotoxic nucleotide to avoid its genomic integration. The chain is 5-hydroxymethyl-dUMP N-hydrolase from Branchiostoma floridae (Florida lancelet).